The following is a 481-amino-acid chain: UDP-N-acetylmuramoyl-L-alanyl-D-glutamate--L-lysine ligase (481 aa).

Ser-42 lines the UDP-N-acetyl-alpha-D-muramoyl-L-alanyl-D-glutamate pocket. 118-124 (GTKGKTT) provides a ligand contact to ATP. UDP-N-acetyl-alpha-D-muramoyl-L-alanyl-D-glutamate contacts are provided by residues Gln-158, 160–161 (TT), Ser-187, and Arg-195. At Lys-229 the chain carries N6-carboxylysine. Positions 404-407 (DDPN) match the L-lysine recognition motif motif.

Belongs to the MurCDEF family. MurE subfamily. Carboxylation is probably crucial for Mg(2+) binding and, consequently, for the gamma-phosphate positioning of ATP.

The protein resides in the cytoplasm. It carries out the reaction UDP-N-acetyl-alpha-D-muramoyl-L-alanyl-D-glutamate + L-lysine + ATP = UDP-N-acetyl-alpha-D-muramoyl-L-alanyl-gamma-D-glutamyl-L-lysine + ADP + phosphate + H(+). It functions in the pathway cell wall biogenesis; peptidoglycan biosynthesis. In terms of biological role, catalyzes the addition of L-lysine to the nucleotide precursor UDP-N-acetylmuramoyl-L-alanyl-D-glutamate (UMAG) in the biosynthesis of bacterial cell-wall peptidoglycan. The chain is UDP-N-acetylmuramoyl-L-alanyl-D-glutamate--L-lysine ligase from Streptococcus pyogenes serotype M28 (strain MGAS6180).